Consider the following 482-residue polypeptide: Methylenetetrahydrofolate--tRNA-(uracil-5-)-methyltransferase TrmFO (482 aa).

20–25 (GGGLAG) contributes to the FAD binding site.

It belongs to the MnmG family. TrmFO subfamily. The cofactor is FAD.

The protein resides in the cytoplasm. The enzyme catalyses uridine(54) in tRNA + (6R)-5,10-methylene-5,6,7,8-tetrahydrofolate + NADH + H(+) = 5-methyluridine(54) in tRNA + (6S)-5,6,7,8-tetrahydrofolate + NAD(+). The catalysed reaction is uridine(54) in tRNA + (6R)-5,10-methylene-5,6,7,8-tetrahydrofolate + NADPH + H(+) = 5-methyluridine(54) in tRNA + (6S)-5,6,7,8-tetrahydrofolate + NADP(+). Its function is as follows. Catalyzes the folate-dependent formation of 5-methyl-uridine at position 54 (M-5-U54) in all tRNAs. In Rhodopseudomonas palustris (strain HaA2), this protein is Methylenetetrahydrofolate--tRNA-(uracil-5-)-methyltransferase TrmFO.